We begin with the raw amino-acid sequence, 307 residues long: Transcription initiation factor IIB (307 aa).

The TFIIB-type zinc-finger motif lies at 11-42 (FTEECPACGSAEIVFDEERGEYVCANCGLVTE). Zn(2+) is bound by residues Cys-15, Cys-18, Cys-34, and Cys-37. Positions 48–69 (PGPEWRHFNPDQRQRRSRTGEP) are disordered. The span at 50-69 (PEWRHFNPDQRQRRSRTGEP) shows a compositional bias: basic and acidic residues. Tandem repeats lie at residues 123–207 (LELE…QRRL) and 218–299 (DHLP…EICE).

This sequence belongs to the TFIIB family.

In terms of biological role, stabilizes TBP binding to an archaeal box-A promoter. Also responsible for recruiting RNA polymerase II to the pre-initiation complex (DNA-TBP-TFIIB). The sequence is that of Transcription initiation factor IIB from Methanopyrus kandleri (strain AV19 / DSM 6324 / JCM 9639 / NBRC 100938).